The chain runs to 1755 residues: MESQQLSNYPHISHGSACASVTSKEVHTNQDPLDVSASKIQEYDKASTKANSQQTTTPASSAVPENPHHASPQPASVPPPQNGPYPQQCMMTQNQANPSGWSFYGHPSMIPYTPYQMSPMYFPPGPQSQFPQYPSSVGTPLSTPSPESGNTFTDSSSADSDMTSTKKYVRPPPMLTSPNDFPNWVKTYIKFLQNSNLGGIIPTVNGKPVRQITDDELTFLYNTFQIFAPSQFLPTWVKDILSVDYTDIMKILSKSIEKMQSDTQEANDIVTLANLQYNGSTPADAFETKVTNIIDRLNNNGIHINNKVACQLIMRGLSGEYKFLRYTRHRHLNMTVAELFLDIHAIYEEQQGSRNSKPNYRRNPSDEKNDSRSYTNTTKPKVIARNPQKTNNSKSKTARAHNVSTSNNSPSTDNDSISKSTTEPIQLNNKHDLHLGQKLTESTVNHTNHSDDELPGHLLLDSGASRTLIRSAHHIHSASSNPDINVVDAQKRNIPINAIGDLQFHFQDNTKTSIKVLHTPNIAYDLLSLNELAAVDITACFTKNVLERSDGTVLAPIVKYGDFYWVSKKYLLPSNISVPTINNVHTSESTRKYPYPFIHRMLAHANAQTIRYSLKNNTITYFNESDVDWSSAIDYQCPDCLIGKSTKHRHIKGSRLKYQNSYEPFQYLHTDIFGPVHNLPKSAPSYFISFTDETTKFRWVYPLHDRREDSILDVFTTILAFIKNQFQASVLVIQMDRGSEYTNRTLHKFLEKNGITPCYTTTADSRAHGVAERLNRTLLDDCRTQLQCSGLPNHLWFSAIEFSTIVRNSLASPKSKKSARQHAGLAGLDISTLLPFGQPVIVNDHNPNSKIHPRGIPGYALHPSRNSYGYIIYLPSLKKTVDTTNYVILQGKESRLDQFNYDALTFDEDLNRLTASYHSFIASNEIQQSNDLNIESDHDFQSDIELHPEQLRNVLSKAVSPTDSTPPSTHTEDSKRVSKTNIRAPREVDPNISESNILPSKKRSSTPQISDIESTGSGGMHRLDVPLLAPMSQSNTHESSHASKSKDFRHSDSYSDNETNHTNVPISSTGGTNNKTVPQTSEQETEKRIIHRSPSIDTSSSESNSLHHVVPIKTSDTCPKENTEESIIADLPLPDLPPEPPTELSDSFKELPPINSHQTNSSLGGIGDSNAYTTINSKKRSLEDNETEIKVSRDTWNTKNMRSLEPPRSKKRIHLIAAVKAVKSIKPIRTTLRYDEAITYNKDIKEKEKYIQAYHKEVNQLLKMKTWDTDRYYDRKEIDPKRVINSMFIFNRKRDGTHKARFVARGDIQHPDTYDPGMQSNTVHHYALMTSLSLALDNNYYITQLDISSAYLYADIKEELYIRPPPHLGMNDKLIRLKKSLYGLKQSGANWYETIKSYLIKQCGMEEVRGWSCVFKNSQVTICLFVDDMILFSKDLNANKKIITTLKKQYDTKIINLGESDNEIQYDILGLEIKYQRGKYMKLGMENSLTEKIPKLNVPLNPKGRKLSAPGQPGLYIDQQELELEEDDYKMKVHEMQKLIGLASYVGYKFRFDLLYYINTLAQHILFPSKQVLDMTYELIQFIWNTRDKQLIWHKSKPVKPTNKLVVISDASYGNQPYYKSQIGNIYLLNGKVIGGKSTKASLTCTSTTEAEIHAISESVPLLNNLSHLVQELNKKPITKGLLTDSKSTISIIISNNEEKFRNRFFGTKAMRLRDEVSGNHLHVCYIETKKNIADVMTKPLPIKTFKLLTNKWIH.

Composition is skewed to polar residues over residues 1–10, 48–60, and 127–152; these read MESQQLSNYP, TKAN…TPAS, and QSQF…GNTF. Disordered stretches follow at residues 1–93, 126–173, and 352–421; these read MESQ…MMTQ, PQSQ…RPPP, and GSRN…SKST. The span at 153 to 165 shows a compositional bias: low complexity; it reads TDSSSADSDMTST. Positions 299 to 401 are RNA-binding; the sequence is NNGIHINNKV…NSKSKTARAH (103 aa). Residues 402 to 418 are compositionally biased toward low complexity; that stretch reads NVSTSNNSPSTDNDSIS. Asp-461 acts as the For protease activity; shared with dimeric partner in catalysis. Residues 583 to 640 are integrase-type zinc finger-like; that stretch reads NVHTSESTRKYPYPFIHRMLAHANAQTIRYSLKNNTITYFNESDVDWSSAIDYQCPDC. The region spanning 660–835 is the Integrase catalytic domain; the sequence is NSYEPFQYLH…AGLDISTLLP (176 aa). Residues Asp-671 and Asp-736 each coordinate Mg(2+). The interval 958–1170 is disordered; the sequence is AVSPTDSTPP…SSLGGIGDSN (213 aa). Low complexity predominate over residues 960–969; sequence SPTDSTPPST. The span at 1005–1015 shows a compositional bias: polar residues; that stretch reads STPQISDIEST. A compositionally biased stretch (basic and acidic residues) spans 1038–1053; that stretch reads ESSHASKSKDFRHSDS. Composition is skewed to polar residues over residues 1054–1082 and 1095–1106; these read YSDN…QTSE and SIDTSSSESNSL. The Bipartite nuclear localization signal signature appears at 1178 to 1212; that stretch reads KKRSLEDNETEIKVSRDTWNTKNMRSLEPPRSKKR. Residues 1338–1476 form the Reverse transcriptase Ty1/copia-type domain; sequence NNYYITQLDI…DILGLEIKYQ (139 aa). Mg(2+) contacts are provided by Asp-1346, Asp-1427, Asp-1428, Asp-1610, Glu-1652, and Asp-1685. The region spanning 1610–1752 is the RNase H Ty1/copia-type domain; it reads DASYGNQPYY…IKTFKLLTNK (143 aa).

As to quaternary structure, the capsid protein forms a homotrimer, from which the VLPs are assembled. The protease is a homodimer, whose active site consists of two apposed aspartic acid residues. Initially, virus-like particles (VLPs) are composed of the structural unprocessed proteins Gag and Gag-Pol, and also contain the host initiator methionine tRNA (tRNA(i)-Met) which serves as a primer for minus-strand DNA synthesis, and a dimer of genomic Ty RNA. Processing of the polyproteins occurs within the particle and proceeds by an ordered pathway, called maturation. First, the protease (PR) is released by autocatalytic cleavage of the Gag-Pol polyprotein yielding capsid protein p45 and a Pol-p154 precursor protein. This cleavage is a prerequisite for subsequent processing of Pol-p154 at the remaining sites to release the mature structural and catalytic proteins. Maturation takes place prior to the RT reaction and is required to produce transposition-competent VLPs.

The protein localises to the cytoplasm. Its subcellular location is the nucleus. It catalyses the reaction DNA(n) + a 2'-deoxyribonucleoside 5'-triphosphate = DNA(n+1) + diphosphate. The enzyme catalyses Endonucleolytic cleavage to 5'-phosphomonoester.. In terms of biological role, capsid protein (CA) is the structural component of the virus-like particle (VLP), forming the shell that encapsulates the retrotransposons dimeric RNA genome. The particles are assembled from trimer-clustered units and there are holes in the capsid shells that allow for the diffusion of macromolecules. CA also has nucleocapsid-like chaperone activity, promoting primer tRNA(i)-Met annealing to the multipartite primer-binding site (PBS), dimerization of Ty1 RNA and initiation of reverse transcription. Functionally, the aspartyl protease (PR) mediates the proteolytic cleavages of the Gag and Gag-Pol polyproteins after assembly of the VLP. Its function is as follows. Reverse transcriptase/ribonuclease H (RT) is a multifunctional enzyme that catalyzes the conversion of the retro-elements RNA genome into dsDNA within the VLP. The enzyme displays a DNA polymerase activity that can copy either DNA or RNA templates, and a ribonuclease H (RNase H) activity that cleaves the RNA strand of RNA-DNA heteroduplexes during plus-strand synthesis and hydrolyzes RNA primers. The conversion leads to a linear dsDNA copy of the retrotransposon that includes long terminal repeats (LTRs) at both ends. Integrase (IN) targets the VLP to the nucleus, where a subparticle preintegration complex (PIC) containing at least integrase and the newly synthesized dsDNA copy of the retrotransposon must transit the nuclear membrane. Once in the nucleus, integrase performs the integration of the dsDNA into the host genome. This is Transposon Ty1-ER2 Gag-Pol polyprotein (TY1B-ER2) from Saccharomyces cerevisiae (strain ATCC 204508 / S288c) (Baker's yeast).